Consider the following 450-residue polypeptide: Glutamyl-tRNA reductase (450 aa).

Residues 45–48, Ser-107, 112–114, and Gln-118 contribute to the substrate site; these read TCNR and ERE. Catalysis depends on Cys-46, which acts as the Nucleophile. Residue 196 to 201 coordinates NADP(+); the sequence is GTGAYA.

It belongs to the glutamyl-tRNA reductase family. As to quaternary structure, homodimer.

The catalysed reaction is (S)-4-amino-5-oxopentanoate + tRNA(Glu) + NADP(+) = L-glutamyl-tRNA(Glu) + NADPH + H(+). Its pathway is porphyrin-containing compound metabolism; protoporphyrin-IX biosynthesis; 5-aminolevulinate from L-glutamyl-tRNA(Glu): step 1/2. Functionally, catalyzes the NADPH-dependent reduction of glutamyl-tRNA(Glu) to glutamate 1-semialdehyde (GSA). This Micrococcus luteus (strain ATCC 4698 / DSM 20030 / JCM 1464 / CCM 169 / CCUG 5858 / IAM 1056 / NBRC 3333 / NCIMB 9278 / NCTC 2665 / VKM Ac-2230) (Micrococcus lysodeikticus) protein is Glutamyl-tRNA reductase.